Reading from the N-terminus, the 196-residue chain is Glycerol-3-phosphate acyltransferase (196 aa).

A run of 5 helical transmembrane segments spans residues 2–22 (GWWL…SYLI), 51–71 (VVGG…VFIA), 80–100 (LVSL…FMKF), 112–132 (IIFC…LVIV), and 137–156 (YASL…GYLF).

It belongs to the PlsY family. As to quaternary structure, probably interacts with PlsX.

Its subcellular location is the cell inner membrane. It catalyses the reaction an acyl phosphate + sn-glycerol 3-phosphate = a 1-acyl-sn-glycero-3-phosphate + phosphate. Its pathway is lipid metabolism; phospholipid metabolism. Its function is as follows. Catalyzes the transfer of an acyl group from acyl-phosphate (acyl-PO(4)) to glycerol-3-phosphate (G3P) to form lysophosphatidic acid (LPA). This enzyme utilizes acyl-phosphate as fatty acyl donor, but not acyl-CoA or acyl-ACP. The chain is Glycerol-3-phosphate acyltransferase from Thermotoga petrophila (strain ATCC BAA-488 / DSM 13995 / JCM 10881 / RKU-1).